The sequence spans 361 residues: Alcohol dehydrogenase 9 (361 aa).

Zn(2+) is bound by residues Cys-51, Thr-53, His-73, Cys-104, Cys-107, Cys-110, Cys-118, and Cys-167. Positions 53 and 73 each coordinate an alcohol. Thr-53 contributes to the NAD(+) binding site. Residues 192-197 (GLGGLG), Lys-221, 278-280 (LGA), and Lys-356 contribute to the NAD(+) site.

It belongs to the zinc-containing alcohol dehydrogenase family. Class-III subfamily. In terms of assembly, homodimer. It depends on Zn(2+) as a cofactor.

The chain is Alcohol dehydrogenase 9 from Catharanthus roseus (Madagascar periwinkle).